A 1319-amino-acid chain; its full sequence is DNA-directed RNA polymerase subunit beta' (1319 aa).

Positions 59, 61, 74, and 77 each coordinate Zn(2+). 3 residues coordinate Mg(2+): aspartate 449, aspartate 451, and aspartate 453. Positions 773, 846, 853, and 856 each coordinate Zn(2+).

Belongs to the RNA polymerase beta' chain family. As to quaternary structure, the RNAP catalytic core consists of 2 alpha, 1 beta, 1 beta' and 1 omega subunit. When a sigma factor is associated with the core the holoenzyme is formed, which can initiate transcription. It depends on Mg(2+) as a cofactor. Zn(2+) serves as cofactor.

It carries out the reaction RNA(n) + a ribonucleoside 5'-triphosphate = RNA(n+1) + diphosphate. Functionally, DNA-dependent RNA polymerase catalyzes the transcription of DNA into RNA using the four ribonucleoside triphosphates as substrates. In Fusobacterium nucleatum subsp. nucleatum (strain ATCC 25586 / DSM 15643 / BCRC 10681 / CIP 101130 / JCM 8532 / KCTC 2640 / LMG 13131 / VPI 4355), this protein is DNA-directed RNA polymerase subunit beta'.